We begin with the raw amino-acid sequence, 303 residues long: Aspartate carbamoyltransferase catalytic subunit (303 aa).

R51 and T52 together coordinate carbamoyl phosphate. K80 lines the L-aspartate pocket. Positions 101, 129, and 132 each coordinate carbamoyl phosphate. Positions 162 and 221 each coordinate L-aspartate. Carbamoyl phosphate is bound by residues L260 and P261.

It belongs to the aspartate/ornithine carbamoyltransferase superfamily. ATCase family. Heterooligomer of catalytic and regulatory chains.

It carries out the reaction carbamoyl phosphate + L-aspartate = N-carbamoyl-L-aspartate + phosphate + H(+). It participates in pyrimidine metabolism; UMP biosynthesis via de novo pathway; (S)-dihydroorotate from bicarbonate: step 2/3. Its function is as follows. Catalyzes the condensation of carbamoyl phosphate and aspartate to form carbamoyl aspartate and inorganic phosphate, the committed step in the de novo pyrimidine nucleotide biosynthesis pathway. This Saccharolobus islandicus (strain M.14.25 / Kamchatka #1) (Sulfolobus islandicus) protein is Aspartate carbamoyltransferase catalytic subunit.